The sequence spans 1034 residues: Platelet endothelial aggregation receptor 1 (1034 aa).

A signal peptide spans 1 to 18; that stretch reads MPLCPLLLLALGLRLTGT. Over 19–754 the chain is Extracellular; the sequence is LNSNDPNVCT…PTSPVTHNSL (736 aa). The 79-residue stretch at 23–101 folds into the EMI domain; it reads DPNVCTFWES…YYESRGACVP (79 aa). 3 disulfide bridges follow: Cys27–Cys89, Cys53–Cys63, and Cys88–Cys99. Asn150 carries an N-linked (GlcNAc...) asparagine glycan. EGF-like domains follow at residues 181–215, 223–258, 266–301, 309–344, and 398–433; these read YGPA…PSCN, DGFF…VICS, HGPN…DRCQ, FGQD…DRCT, and HGPG…PHCA. 5 disulfide bridges follow: Cys185/Cys196, Cys189/Cys203, Cys205/Cys214, Cys233/Cys246, and Cys248/Cys257. N-linked (GlcNAc...) asparagine glycosylation is present at Asn269. Disulfide bonds link Cys270–Cys282, Cys276–Cys289, Cys291–Cys300, Cys313–Cys325, Cys319–Cys332, Cys334–Cys343, Cys402–Cys414, Cys408–Cys421, and Cys423–Cys432. A glycan (N-linked (GlcNAc...) asparagine) is linked at Asn474. EGF-like domains are found at residues 484-519, 575-605, 613-648, and 656-691; these read WGFN…AHCQ, SNTC…PSCQ, YGKR…PDCS, and WGLK…PNCL. Disulfide bonds link Cys488–Cys500, Cys494–Cys507, Cys509–Cys518, Cys578–Cys586, Cys580–Cys593, Cys595–Cys604, Cys617–Cys629, Cys622–Cys636, Cys638–Cys647, Cys660–Cys672, Cys666–Cys679, and Cys681–Cys690. Residues 755 to 775 form a helical membrane-spanning segment; that stretch reads GAVIGIAVLGTLVVALIALFI. Residues 776-1034 are Cytoplasmic-facing; it reads GYRQWQKGKE…PSPPSRRQDR (259 aa). The segment at 823–883 is disordered; it reads TLSQCSPNPP…PHERGASHLD (61 aa). Positions 851-883 are enriched in basic and acidic residues; it reads RPSRAHGRENHVTLPADWKHRREPHERGASHLD. Position 923 is a phosphotyrosine (Tyr923). Residues 925–1034 are disordered; that stretch reads TIRDLPSLPG…PSPPSRRQDR (110 aa). Ser951 carries the post-translational modification Phosphoserine. A compositionally biased stretch (polar residues) spans 972-991; that stretch reads DSGTYEQPSPLSHNEESLGS. Phosphoserine is present on Ser1026.

Belongs to the MEGF family. As to quaternary structure, interacts with SHC2 upon its aggregation-induced tyrosine phosphorylation. Interacts (via extracellular domain) with SVEP1. In terms of processing, phosphorylated in the intracellular domain on tyrosine residues. Phosphorylated on tyrosine residues by SRC. Tyrosine phosphorylation is detected upon platelet aggregation stimulated by collagen, TRAP and thrombin and platelet-platelet contacts but not after platelet activation. Tyrosine phosphorylation enhanced its association with SHC1 and SHC2. Phosphorylated in the intracellular domain on tyrosine residues. Phosphorylated when in the presence of SVEP1. In terms of tissue distribution, expressed in thymocytes, bone marrow stromal and osteogenic cells (at protein level). Strongly expressed in kidney and heart. Moderately expressed in lung, spleen, thymus, liver, brain, testis, skin and stomach. Expressed in hematopoietic stem progenitor cells.

The protein localises to the cell membrane. Its subcellular location is the cell projection. It localises to the lamellipodium. Its function is as follows. Required for SVEP1-mediated platelet activation, via its interaction with SVEP1 and subsequent activation of AKT/mTOR signaling. May be involved in the early stages of hematopoiesis. The sequence is that of Platelet endothelial aggregation receptor 1 (Pear1) from Mus musculus (Mouse).